A 436-amino-acid chain; its full sequence is MDKDSTYYFIGIKGSGMSSLALILHDEGYKVEGSDIEQYTFTQKGLEAAGIKILPFDPANLREGLTVIAGNAFTDEHPEIKKARAMGLKVIRYHELLGQMLDKYTSIGVAGTHGKTSTTGLLAHVLSGLDKTSYLIGDGTGKGIPDARFFVFEADEYRRHFIAYHPDYMIMTNVDFDHPDYYKDLADVESAFQQVADQVHKGIFAWGEDESLRKINTSVPVYYYGTKENDDFQATNISRTTTGSEFDVIHKGEKLGRFTINLFGEHNVLNSLAVIAVAYFEKVDLDLVQKELLTYQGVKRRFSKEAVADNILIDDYAHHPSEIKATLDAARQEFPDKKIVAVFQPHTYSRTAALMDGFAKSLSLADQVVLTEIFGSAREDAGAVSSQDLADKIGNNTKLIHQDDLSAISDLHDAVLVFMGAGDITKYENAYKALFK.

111–117 (GTHGKTS) provides a ligand contact to ATP.

The protein belongs to the MurCDEF family.

The protein localises to the cytoplasm. The enzyme catalyses UDP-N-acetyl-alpha-D-muramate + L-alanine + ATP = UDP-N-acetyl-alpha-D-muramoyl-L-alanine + ADP + phosphate + H(+). The protein operates within cell wall biogenesis; peptidoglycan biosynthesis. Functionally, cell wall formation. This chain is UDP-N-acetylmuramate--L-alanine ligase, found in Pediococcus pentosaceus (strain ATCC 25745 / CCUG 21536 / LMG 10740 / 183-1w).